The chain runs to 640 residues: RecBCD enzyme subunit RecD (640 aa).

An ATP-binding site is contributed by 194 to 201 (GGPGTGKT).

Belongs to the RecD family. As to quaternary structure, heterotrimer of RecB, RecC and RecD. All subunits contribute to DNA-binding.

It catalyses the reaction Couples ATP hydrolysis with the unwinding of duplex DNA at the replication fork by translocating in the 5'-3' direction. This creates two antiparallel DNA single strands (ssDNA). The leading ssDNA polymer is the template for DNA polymerase III holoenzyme which synthesizes a continuous strand.. It carries out the reaction ATP + H2O = ADP + phosphate + H(+). Functionally, a helicase/nuclease that prepares dsDNA breaks (DSB) for recombinational DNA repair. Binds to DSBs and unwinds DNA via a highly rapid and processive ATP-dependent bidirectional helicase activity. Unwinds dsDNA until it encounters a Chi (crossover hotspot instigator) sequence from the 3' direction. Cuts ssDNA a few nucleotides 3' to the Chi site. The properties and activities of the enzyme are changed at Chi. The Chi-altered holoenzyme produces a long 3'-ssDNA overhang and facilitates RecA-binding to the ssDNA for homologous DNA recombination and repair. Holoenzyme degrades any linearized DNA that is unable to undergo homologous recombination. In the holoenzyme this subunit has ssDNA-dependent ATPase and 5'-3' helicase activity. When added to pre-assembled RecBC greatly stimulates nuclease activity and augments holoenzyme processivity. Negatively regulates the RecA-loading ability of RecBCD. This chain is RecBCD enzyme subunit RecD, found in Haemophilus influenzae (strain ATCC 51907 / DSM 11121 / KW20 / Rd).